The chain runs to 112 residues: UPF0329 protein ECU11_0080 (112 aa).

Belongs to the UPF0329 family.

In Encephalitozoon cuniculi (strain GB-M1) (Microsporidian parasite), this protein is UPF0329 protein ECU11_0080.